Reading from the N-terminus, the 691-residue chain is Dipeptidyl-peptidase 5 (691 aa).

A signal peptide spans 1 to 20 (MKRTILSLLAAVSLAIPVYA). Active-site charge relay system residues include S549, D634, and H666.

The protein belongs to the peptidase S9C family. Homodimer.

It localises to the periplasm. Catalyzes the removal of dipeptides from the N-terminus of oligopeptides. Prefers Ala and hydrophobic residues at the P1 position, and has no preference for P2 residues. Shows the highest dipeptidyl peptidase activity toward the synthetic substrate Lys-Ala-methylcoumaryl-7-amide (Lys-Ala-MCA). Is likely involved in amino acid metabolism and bacterial growth/survival of asaccharolytic P.endodontalis, that utilizes amino acids from extracellular proteinaceous nutrients as energy and carbon sources. The chain is Dipeptidyl-peptidase 5 from Porphyromonas endodontalis (strain ATCC 35406 / DSM 24491 / JCM 8526 / CCUG 16442 / BCRC 14492 / NCTC 13058 / HG 370) (Bacteroides endodontalis).